Consider the following 503-residue polypeptide: Cytochrome P450 3A14 (503 aa).

C442 contributes to the heme binding site.

It belongs to the cytochrome P450 family. Heme is required as a cofactor.

Its subcellular location is the endoplasmic reticulum membrane. It is found in the microsome membrane. The catalysed reaction is an organic molecule + reduced [NADPH--hemoprotein reductase] + O2 = an alcohol + oxidized [NADPH--hemoprotein reductase] + H2O + H(+). Functionally, cytochromes P450 are a group of heme-thiolate monooxygenases. In liver microsomes, this enzyme is involved in an NADPH-dependent electron transport pathway. It oxidizes a variety of structurally unrelated compounds, including steroids, fatty acids, and xenobiotics. This is Cytochrome P450 3A14 (CYP3A14) from Cavia porcellus (Guinea pig).